The chain runs to 230 residues: Uracil-DNA glycosylase (230 aa).

Residue Asp-71 is the Proton acceptor of the active site.

The protein belongs to the uracil-DNA glycosylase (UDG) superfamily. UNG family.

The protein resides in the cytoplasm. The enzyme catalyses Hydrolyzes single-stranded DNA or mismatched double-stranded DNA and polynucleotides, releasing free uracil.. Functionally, excises uracil residues from the DNA which can arise as a result of misincorporation of dUMP residues by DNA polymerase or due to deamination of cytosine. The protein is Uracil-DNA glycosylase of Tropheryma whipplei (strain TW08/27) (Whipple's bacillus).